The sequence spans 480 residues: Aspartyl/glutamyl-tRNA(Asn/Gln) amidotransferase subunit B (480 aa).

The protein belongs to the GatB/GatE family. GatB subfamily. As to quaternary structure, heterotrimer of A, B and C subunits.

The catalysed reaction is L-glutamyl-tRNA(Gln) + L-glutamine + ATP + H2O = L-glutaminyl-tRNA(Gln) + L-glutamate + ADP + phosphate + H(+). The enzyme catalyses L-aspartyl-tRNA(Asn) + L-glutamine + ATP + H2O = L-asparaginyl-tRNA(Asn) + L-glutamate + ADP + phosphate + 2 H(+). Its function is as follows. Allows the formation of correctly charged Asn-tRNA(Asn) or Gln-tRNA(Gln) through the transamidation of misacylated Asp-tRNA(Asn) or Glu-tRNA(Gln) in organisms which lack either or both of asparaginyl-tRNA or glutaminyl-tRNA synthetases. The reaction takes place in the presence of glutamine and ATP through an activated phospho-Asp-tRNA(Asn) or phospho-Glu-tRNA(Gln). The chain is Aspartyl/glutamyl-tRNA(Asn/Gln) amidotransferase subunit B from Streptococcus pneumoniae serotype 2 (strain D39 / NCTC 7466).